The primary structure comprises 74 residues: CLAVATA3/ESR (CLE)-related protein 19 (74 aa).

The first 24 residues, 1 to 24 (MKIKGLMILASSLLILAFIHQSES), serve as a signal peptide directing secretion. Asn-34 and Asn-54 each carry an N-linked (GlcNAc...) asparagine glycan. Residues Pro-65 and Pro-68 each carry the hydroxyproline modification. Pro-68 is a glycosylation site (O-linked (Ara...) hydroxyproline).

Belongs to the CLV3/ESR signal peptide family. Post-translationally, the O-glycosylation (arabinosylation) of the hydroxyproline Pro-68 enhances binding affinity of the CLE19p peptide for its receptor. In terms of tissue distribution, mostly expressed in heart-shape embryos, pollen and young flower buds, and, to a lower extent, in inflorescence, leaves and roots.

Its subcellular location is the secreted. The protein localises to the extracellular space. Functionally, extracellular signal peptide that regulates cell fate. Represses root apical meristem maintenance. The sequence is that of CLAVATA3/ESR (CLE)-related protein 19 from Arabidopsis thaliana (Mouse-ear cress).